Here is a 478-residue protein sequence, read N- to C-terminus: UBP1-associated protein 2A (478 aa).

Residues 1-99 are disordered; the sequence is MTKKRKLEGE…NQEDDDDEPI (99 aa). The segment covering 41-75 has biased composition (acidic residues); that stretch reads GDVEEVEYEEVEEEQEEEVEDDDDEDDGDENEDQT. 2 RRM domains span residues 140–217 and 245–328; these read RKIF…LASK and KKIY…KPGK. Disordered stretches follow at residues 321–359 and 442–478; these read IDGP…GGHG and GTQP…YMGH. Over residues 442–456 the composition is skewed to low complexity; sequence GTQPGLQGGYQTPQP. Positions 457–470 are enriched in gly residues; the sequence is GQGGTSRGQHGVGP.

Interacts with UBA1A, UBA2A, UBP1A, UBP1B, UBP1C and SRK2E. As to expression, expressed in young leaves, flowers and embryos.

It is found in the nucleus. Functionally, heterogeneous nuclear ribonucleoprotein (hnRNP)-like protein that acts as a component of a complex regulating the turnover of mRNAs in the nucleus. Binds with high affinity to RNA molecules that contain U-rich sequences in 3'-UTRs. May function in complex with UBP1 and contribute to the stabilization of mRNAs in the nucleus. However, unlike UBP1, UBA2A does not stimulate pre-mRNA splicing. In Arabidopsis thaliana (Mouse-ear cress), this protein is UBP1-associated protein 2A (UBA2A).